A 90-amino-acid polypeptide reads, in one-letter code: U7-theraphotoxin-Hhn1e (90 aa).

The signal sequence occupies residues 1–19 (MKTAIFTVVLALAVFAVLS). Positions 20 to 50 (FGWEANEKALSEEFTELIHEKEAASETEARE) are excised as a propeptide. Intrachain disulfides connect C51–C65, C58–C70, and C64–C81.

Belongs to the neurotoxin 10 (Hwtx-1) family. 13 (Hntx-13) subfamily. In terms of tissue distribution, expressed by the venom gland.

Its subcellular location is the secreted. In terms of biological role, ion channel inhibitor. In Cyriopagopus hainanus (Chinese bird spider), this protein is U7-theraphotoxin-Hhn1e.